The chain runs to 192 residues: Imidazole glycerol phosphate synthase subunit HisH (192 aa).

Positions 1–192 constitute a Glutamine amidotransferase type-1 domain; it reads MIAIIDYGLG…QALKGGFIND (192 aa). Cys-77 functions as the Nucleophile in the catalytic mechanism. Active-site residues include His-169 and Glu-171.

Heterodimer of HisH and HisF.

The protein resides in the cytoplasm. The enzyme catalyses 5-[(5-phospho-1-deoxy-D-ribulos-1-ylimino)methylamino]-1-(5-phospho-beta-D-ribosyl)imidazole-4-carboxamide + L-glutamine = D-erythro-1-(imidazol-4-yl)glycerol 3-phosphate + 5-amino-1-(5-phospho-beta-D-ribosyl)imidazole-4-carboxamide + L-glutamate + H(+). It carries out the reaction L-glutamine + H2O = L-glutamate + NH4(+). The protein operates within amino-acid biosynthesis; L-histidine biosynthesis; L-histidine from 5-phospho-alpha-D-ribose 1-diphosphate: step 5/9. IGPS catalyzes the conversion of PRFAR and glutamine to IGP, AICAR and glutamate. The HisH subunit catalyzes the hydrolysis of glutamine to glutamate and ammonia as part of the synthesis of IGP and AICAR. The resulting ammonia molecule is channeled to the active site of HisF. The protein is Imidazole glycerol phosphate synthase subunit HisH of Staphylococcus epidermidis (strain ATCC 35984 / DSM 28319 / BCRC 17069 / CCUG 31568 / BM 3577 / RP62A).